We begin with the raw amino-acid sequence, 387 residues long: Cyclin-J-like protein (387 aa).

Residues Asp-13–Cys-142 form the Cyclin N-terminal domain.

This sequence belongs to the cyclin family. Cyclin J subfamily.

The protein is Cyclin-J-like protein (Ccnjl) of Mus musculus (Mouse).